The chain runs to 340 residues: UPF0324 membrane protein BA_5405/GBAA_5405/BAS5024 (340 aa).

Helical transmembrane passes span F13–L35, I40–G59, V99–T118, G128–V150, T157–Y179, Y189–G211, A218–F240, L255–P277, V279–L301, and F316–G338.

The protein belongs to the UPF0324 family.

The protein resides in the cell membrane. In Bacillus anthracis, this protein is UPF0324 membrane protein BA_5405/GBAA_5405/BAS5024.